A 327-amino-acid chain; its full sequence is MKNWKKAIALVASAAALVSVAACGSSNAGGSSDSGKKTVGFVAVGPEGGFRTANEKDIQKAFEDAGFDLTYSPTQNNDQQKQIQAFNKFVNDEVDAIILSSTEDSGWDDSLKKAAEAEIPVFTVDRNVDVKDAEAKKAIVAHIGPSNVWCGEQAAEFVNKNFPDGANGFILEGPAGLSVVKDRGTGWGNKVASNVKVLESQSANWSTDEAKTVTAGLLDKYKSDNPQFIFAQNDEMGLGAAQAVDAAGLKGKVKIITIDGTKNALQALVDGDLSYVIEYNPIFGKETAQAVKDYLDGKTVEKDIEIESKTFDAASAKEALDNNTRAY.

Positions 1–22 (MKNWKKAIALVASAAALVSVAA) are cleaved as a signal peptide. Cys23 carries N-palmitoyl cysteine lipidation. Residue Cys23 is the site of S-diacylglycerol cysteine attachment.

The protein belongs to the bacterial solute-binding protein 2 family. In terms of assembly, the complex is composed of an ATP-binding protein (FruK), two transmembrane proteins (FruF and FruG) and a solute-binding protein (FruE).

The protein resides in the cell membrane. Part of the high-affinity ABC transporter complex FruEKFG involved in fructose uptake. Can also transport ribose and xylose, with lower affinity. Binds fructose, ribose and xylose, with fructose as the preferred substrate. The polypeptide is Fructose import binding protein FruE (Bifidobacterium longum (strain NCC 2705)).